We begin with the raw amino-acid sequence, 248 residues long: Probable transcriptional regulatory protein trd_1132 (248 aa).

Belongs to the TACO1 family.

It is found in the cytoplasm. The polypeptide is Probable transcriptional regulatory protein trd_1132 (Thermomicrobium roseum (strain ATCC 27502 / DSM 5159 / P-2)).